A 556-amino-acid polypeptide reads, in one-letter code: Arginine--tRNA ligase (556 aa).

The 'HIGH' region motif lies at 117–127 (PNVAKQMHVGH).

It belongs to the class-I aminoacyl-tRNA synthetase family. Monomer.

Its subcellular location is the cytoplasm. The enzyme catalyses tRNA(Arg) + L-arginine + ATP = L-arginyl-tRNA(Arg) + AMP + diphosphate. The protein is Arginine--tRNA ligase of Cutibacterium acnes (strain DSM 16379 / KPA171202) (Propionibacterium acnes).